The primary structure comprises 1033 residues: Error-prone DNA polymerase (1033 aa).

Belongs to the DNA polymerase type-C family. DnaE2 subfamily.

The protein localises to the cytoplasm. It carries out the reaction DNA(n) + a 2'-deoxyribonucleoside 5'-triphosphate = DNA(n+1) + diphosphate. DNA polymerase involved in damage-induced mutagenesis and translesion synthesis (TLS). It is not the major replicative DNA polymerase. The chain is Error-prone DNA polymerase from Teredinibacter turnerae (strain ATCC 39867 / T7901).